A 756-amino-acid polypeptide reads, in one-letter code: Xylosyl- and glucuronyltransferase LARGE1 (756 aa).

Residues 1-10 (MLGICRGRRK) are Cytoplasmic-facing. Residues 11-31 (FLAASLTVLFVPAVTWIYLFA) form a helical; Signal-anchor for type II membrane protein membrane-spanning segment. Topologically, residues 32 to 756 (GSFEDGKPVS…LKYLTAENNS (725 aa)) are lumenal. Disordered regions lie at residues 42–63 (LSPLESQPHSPRYTASSQRDRE) and 81–109 (KQLSLAQGRSPSHHRGNHSKTYSMEEGTG). Residues 44–58 (PLESQPHSPRYTASS) are compositionally biased toward polar residues. Positions 55–90 (TASSQRDRESLEVRMREVEEENRVLRKQLSLAQGRS) form a coiled coil. Residues N97, N122, and N148 are each glycosylated (N-linked (GlcNAc...) asparagine). Residues 138–413 (IHVAIVCAGY…FLEYDGNLLR (276 aa)) form a xylosyltransferase activity region. Mn(2+) is bound by residues D242 and D244. A glycan (N-linked (GlcNAc...) asparagine) is linked at N272. Residues 414 to 756 (RELFGCPSEA…LKYLTAENNS (343 aa)) are glucuronyltransferase activity. Mn(2+) contacts are provided by D563 and D565.

This sequence in the C-terminal section; belongs to the glycosyltransferase 49 family. It in the N-terminal section; belongs to the glycosyltransferase 8 family. Requires Mn(2+) as cofactor.

It is found in the golgi apparatus membrane. The enzyme catalyses 3-O-[beta-D-GlcA-(1-&gt;3)-beta-D-Xyl-(1-&gt;4)-Rib-ol-P-Rib-ol-P-3-beta-D-GalNAc-(1-&gt;3)-beta-D-GlcNAc-(1-&gt;4)-(O-6-P-alpha-D-Man)]-Thr-[protein] + UDP-alpha-D-xylose = 3-O-[alpha-D-Xyl-(1-&gt;3)-beta-D-GlcA-(1-&gt;4)-beta-D-Xyl-(1-&gt;4)-Rib-ol-P-Rib-ol-P-3-beta-D-GalNAc-(1-&gt;3)-beta-D-GlcNAc-(1-&gt;4)-(O-6-P-alpha-D-Man)]-Thr-[protein] + UDP + H(+). The catalysed reaction is 3-O-{(1-&gt;[3)-alpha-D-Xyl-(1-&gt;3)-beta-D-GlcA-(1-&gt;](n)-4)-beta-D-Xyl-(1-&gt;4)-Rib-ol-P-Rib-ol-P-3-beta-D-GalNAc-(1-&gt;3)-beta-D-GlcNAc-(1-&gt;4)-O-6-P-alpha-D-Man}-L-Thr-[protein] + UDP-alpha-D-glucuronate = 3-O-{beta-D-GlcA-(1-&gt;[3)-alpha-D-Xyl-(1-&gt;3)-beta-D-GlcA-(1-&gt;](n)-4)-beta-D-Xyl-(1-&gt;4)-Rib-ol-P-Rib-ol-P-3-beta-D-GalNAc-(1-&gt;3)-beta-D-GlcNAc-(1-&gt;4)-O-6-P-alpha-D-Man}-L-Thr-[protein] + UDP + H(+). It carries out the reaction 3-O-{beta-D-GlcA-(1-&gt;[3)-alpha-D-Xyl-(1-&gt;3)-beta-D-GlcA-(1-&gt;](n)-4)-beta-D-Xyl-(1-&gt;4)-Rib-ol-P-Rib-ol-P-3-beta-D-GalNAc-(1-&gt;3)-beta-D-GlcNAc-(1-&gt;4)-O-6-P-alpha-D-Man}-L-Thr-[protein] + UDP-alpha-D-xylose = 3-O-{(1-&gt;[3)-alpha-D-Xyl-(1-&gt;3)-beta-D-GlcA-(1-&gt;](n+1)-4)-beta-D-Xyl-(1-&gt;4)-Rib-ol-P-Rib-ol-P-3-beta-D-GalNAc-(1-&gt;3)-beta-D-GlcNAc-(1-&gt;4)-O-6-P-alpha-D-Man}-L-Thr-[protein] + UDP + H(+). It participates in protein modification; protein glycosylation. In terms of biological role, bifunctional glycosyltransferase with both alpha-1,3-xylosyltransferase and beta-1,3-glucuronyltransferase activities involved in the maturation of alpha-dystroglycan (DAG1) by glycosylation leading to DAG1 binding to laminin G-like domain-containing extracellular proteins with high affinity. Elongates the glucuronyl-beta-1,4-xylose-beta disaccharide primer structure initiated by B4GAT1 by adding repeating units [-3-Xylose-alpha-1,3-GlcA-beta-1-] to produce a heteropolysaccharide. Requires the phosphorylation of core M3 (O-mannosyl trisaccharide) by POMK to elongate the glucuronyl-beta-1,4-xylose-beta disaccharide primer. Plays a key role in skeletal muscle function and regeneration. This chain is Xylosyl- and glucuronyltransferase LARGE1, found in Gallus gallus (Chicken).